Here is a 306-residue protein sequence, read N- to C-terminus: D-alanine--D-alanine ligase (306 aa).

One can recognise an ATP-grasp domain in the interval 101-301; sequence KKILAHAGLP…FPDLVEHLVR (201 aa). 129–185 contributes to the ATP binding site; it reads VAELGLPVVVKAPTQGSSIGVYIVEREEDLEARITDAVAYGGTRVLVEKFIAGPELT. Mg(2+) contacts are provided by aspartate 256, glutamate 268, and asparagine 270.

It belongs to the D-alanine--D-alanine ligase family. Mg(2+) serves as cofactor. It depends on Mn(2+) as a cofactor.

The protein resides in the cytoplasm. It carries out the reaction 2 D-alanine + ATP = D-alanyl-D-alanine + ADP + phosphate + H(+). It participates in cell wall biogenesis; peptidoglycan biosynthesis. Its function is as follows. Cell wall formation. This is D-alanine--D-alanine ligase from Desulforudis audaxviator (strain MP104C).